A 532-amino-acid polypeptide reads, in one-letter code: Apolipoprotein N-acyltransferase (532 aa).

Transmembrane regions (helical) follow at residues 37–57, 75–95, 106–126, 128–148, 179–199, and 207–227; these read IFVA…GAIA, WWFG…ALLV, LAVL…AMIA, LLWS…ALAE, VIGL…PALL, and TGIG…AWTL. In terms of domain architecture, CN hydrolase spans 245-494; sequence VQPSIAQAMK…VGVVDSYLPS (250 aa). Catalysis depends on Glu289, which acts as the Proton acceptor. Lys353 is a catalytic residue. Cys406 serves as the catalytic Nucleophile. Residues 505 to 525 form a helical membrane-spanning segment; sequence GWIQTVLILLTLLAASVGLIL.

This sequence belongs to the CN hydrolase family. Apolipoprotein N-acyltransferase subfamily.

The protein resides in the cell inner membrane. The catalysed reaction is N-terminal S-1,2-diacyl-sn-glyceryl-L-cysteinyl-[lipoprotein] + a glycerophospholipid = N-acyl-S-1,2-diacyl-sn-glyceryl-L-cysteinyl-[lipoprotein] + a 2-acyl-sn-glycero-3-phospholipid + H(+). The protein operates within protein modification; lipoprotein biosynthesis (N-acyl transfer). Catalyzes the phospholipid dependent N-acylation of the N-terminal cysteine of apolipoprotein, the last step in lipoprotein maturation. This Brucella melitensis biotype 1 (strain ATCC 23456 / CCUG 17765 / NCTC 10094 / 16M) protein is Apolipoprotein N-acyltransferase.